We begin with the raw amino-acid sequence, 136 residues long: ATP synthase epsilon chain (136 aa).

This sequence belongs to the ATPase epsilon chain family. In terms of assembly, F-type ATPases have 2 components, CF(1) - the catalytic core - and CF(0) - the membrane proton channel. CF(1) has five subunits: alpha(3), beta(3), gamma(1), delta(1), epsilon(1). CF(0) has three main subunits: a, b and c.

It is found in the cell membrane. Functionally, produces ATP from ADP in the presence of a proton gradient across the membrane. This is ATP synthase epsilon chain from Ureaplasma parvum serovar 3 (strain ATCC 27815 / 27 / NCTC 11736).